The following is a 437-amino-acid chain: uncharacterized protein (437 aa).

The next 2 helical transmembrane spans lie at 102 to 122 and 272 to 292; these read GIYM…PVII and ILSI…ATVW.

It belongs to the herpesviridae UL49 family.

Its subcellular location is the host membrane. This is an uncharacterized protein from Connochaetes taurinus (Blue wildebeest).